The sequence spans 292 residues: Universal stress protein Mb2346c (292 aa).

This sequence belongs to the universal stress protein A family.

This Mycobacterium bovis (strain ATCC BAA-935 / AF2122/97) protein is Universal stress protein Mb2346c.